Here is an 865-residue protein sequence, read N- to C-terminus: Protein translocase subunit SecA (865 aa).

ATP contacts are provided by residues glutamine 93, glycine 111–threonine 115, and aspartate 501. 4 residues coordinate Zn(2+): cysteine 841, cysteine 843, cysteine 852, and cysteine 853.

The protein belongs to the SecA family. Monomer and homodimer. Part of the essential Sec protein translocation apparatus which comprises SecA, SecYEG and auxiliary proteins SecDF-YajC and YidC. Zn(2+) serves as cofactor.

The protein localises to the cell inner membrane. It is found in the cytoplasm. It catalyses the reaction ATP + H2O + cellular proteinSide 1 = ADP + phosphate + cellular proteinSide 2.. Functionally, part of the Sec protein translocase complex. Interacts with the SecYEG preprotein conducting channel. Has a central role in coupling the hydrolysis of ATP to the transfer of proteins into and across the cell membrane, serving as an ATP-driven molecular motor driving the stepwise translocation of polypeptide chains across the membrane. In Helicobacter pylori (strain Shi470), this protein is Protein translocase subunit SecA.